Reading from the N-terminus, the 234-residue chain is Cyclo(L-leucyl-L-leucyl) synthase (234 aa).

S28 acts as the Nucleophile in catalysis. Substrate contacts are provided by residues 171–175 (YVLAE), Y195, and 200–201 (EL).

This sequence belongs to the CDPS family.

The enzyme catalyses 2 L-leucyl-tRNA(Leu) = cyclo(L-leucyl-L-leucyl) + 2 tRNA(Leu) + 2 H(+). It uses activated amino acids in the form of aminoacyl-tRNAs (aa-tRNAs) as substrates to catalyze the ATP-independent formation of cyclodipeptides which are intermediates in diketopiperazine (DKP) biosynthetic pathways. Catalyzes the formation of cyclo(L-Leu-L-Leu) (cLL) from L-leucyl-tRNA(Leu). Can incorporate various nonpolar residues, such as L-phenylalanine, L-leucine and L-methionine, into cyclodipeptides. The polypeptide is Cyclo(L-leucyl-L-leucyl) synthase (Staphylococcus haemolyticus (strain JCSC1435)).